The following is a 362-amino-acid chain: MHKSKRNPSFSSTLLDEIYNSIDPKTQKTQPYVGSVNTTTKKQSIVTRSVPDRKIHRDRFFGSVSSSSDSNSSIFSSSDTELTHGKKTTSSRPLCFGPSKTKPRKTEDKTLFHQNRATRVYDDYDYASDVPKFNRHDENWENTRNRRSVKSSGNQKKPKTPASPGGRIVNFLNSLFSNNSKQSNAVKSYPRKTSYDDSAYVRKTSNDYHSSTTTCSSASSFSRSCMNKGYEKSSGRIKRSVRFSPVNVIVPESFTSKEEDYFSNGNARKSVKKNVEDGGRRSVEEIAREFLRDYHKNHENSLVKTNGFEDYEDDDEDDDDDDVASDSSSDLFELDLVGNHHHHNVYGDELPVYETTFAGLIL.

Disordered stretches follow at residues 22–113, 132–168, and 303–327; these read IDPK…TLFH, KFNRHDENWENTRNRRSVKSSGNQKKPKTPASPGGRI, and VKTNGFEDYEDDDEDDDDDDVASDS. The span at 23–47 shows a compositional bias: polar residues; the sequence is DPKTQKTQPYVGSVNTTTKKQSIVT. Residues 50 to 60 show a composition bias toward basic and acidic residues; the sequence is VPDRKIHRDRF. The segment covering 63-78 has biased composition (low complexity); sequence SVSSSSDSNSSIFSSS. The span at 132–144 shows a compositional bias: basic and acidic residues; it reads KFNRHDENWENTR. Residues 309 to 324 are compositionally biased toward acidic residues; it reads EDYEDDDEDDDDDDVA.

It belongs to the BIG GRAIN 1 (BG1) plant protein family.

The protein resides in the cell membrane. Its function is as follows. Involved in auxin transport. Regulator of the auxin signaling pathway. This chain is Protein BIG GRAIN 1-like D, found in Arabidopsis thaliana (Mouse-ear cress).